Consider the following 151-residue polypeptide: D-aminoacyl-tRNA deacylase (151 aa).

Residues 136 to 137 carry the Gly-cisPro motif, important for rejection of L-amino acids motif; the sequence is GP.

Belongs to the DTD family. Homodimer.

The protein localises to the cytoplasm. The catalysed reaction is glycyl-tRNA(Ala) + H2O = tRNA(Ala) + glycine + H(+). The enzyme catalyses a D-aminoacyl-tRNA + H2O = a tRNA + a D-alpha-amino acid + H(+). Functionally, an aminoacyl-tRNA editing enzyme that deacylates mischarged D-aminoacyl-tRNAs. Also deacylates mischarged glycyl-tRNA(Ala), protecting cells against glycine mischarging by AlaRS. Acts via tRNA-based rather than protein-based catalysis; rejects L-amino acids rather than detecting D-amino acids in the active site. By recycling D-aminoacyl-tRNA to D-amino acids and free tRNA molecules, this enzyme counteracts the toxicity associated with the formation of D-aminoacyl-tRNA entities in vivo and helps enforce protein L-homochirality. The polypeptide is D-aminoacyl-tRNA deacylase (Streptococcus gordonii (strain Challis / ATCC 35105 / BCRC 15272 / CH1 / DL1 / V288)).